We begin with the raw amino-acid sequence, 127 residues long: Small ribosomal subunit protein uS11 (127 aa).

Belongs to the universal ribosomal protein uS11 family. As to quaternary structure, part of the 30S ribosomal subunit. Interacts with proteins S7 and S18. Binds to IF-3.

Its function is as follows. Located on the platform of the 30S subunit, it bridges several disparate RNA helices of the 16S rRNA. Forms part of the Shine-Dalgarno cleft in the 70S ribosome. This Streptococcus gordonii (strain Challis / ATCC 35105 / BCRC 15272 / CH1 / DL1 / V288) protein is Small ribosomal subunit protein uS11.